Here is a 231-residue protein sequence, read N- to C-terminus: Verlamelin biosynthesis protein B (231 aa).

It participates in secondary metabolite biosynthesis. In terms of biological role, part of the gene cluster that mediates the biosynthesis of verlamelin, a lipopeptide that exhibits antifungal activity against plant pathogenic fungi. Verlamelin is a cyclic hexadepsipeptide and is bridged by ester bonding between a 5-hydroxytetradecanoic acid moiety and a carboxyl group on the terminal Val of amide-bonded tetradecanoyl-hexapeptide D-allo-Thr-D-Ala-L-Pro-L-Gln-D-Tyr-L-Val. VlmA and vlmB are altogether regarded as essential components in the biosynthesis of 5-hydroxytetradecanoic acid. VlmA catalyzes the hydroxylation at position C5 of tetradecanoic acid produced in primary metabolism, while the precise function of vlmB still remains to be solved. To be loaded onto the waiting NRPS, 5-hydroxytetradecanoic acid is activated in the form of acyladenylate by the AMP-dependent ligase vlmC. VlmS seems to accept the fatty-acyl intermediate onto the initial module to further elongate amino acid residues by the downstream modules. In addition, in the last module at its C-terminus, vlmS contains a surplus condensation (C) domain that may be involved in cyclization, the last step to form verlamelin. This Lecanicillium sp protein is Verlamelin biosynthesis protein B.